An 870-amino-acid polypeptide reads, in one-letter code: Probable disease resistance protein At1g59620 (870 aa).

Positions 123 to 432 constitute an NB-ARC domain; sequence DKRNMRQTFS…AAEGMPRPRY (310 aa). 167 to 174 lines the ATP pocket; that stretch reads GMGGIGKT. 6 LRR repeats span residues 543–567, 568–590, 703–726, 735–758, 759–786, and 808–833; these read LQLMRVLDLHGVEFGGELPSSIGLL, IHLRYLSLYRAKASHLPSSMQNL, MSGIEGLVLDCDQLKHLNLRIYMP, PWHLRNISLAECCLKEDPMPILEK, LLQLNEVSLSHQSFCGKRMVCSDGGFPQ, and MPRLHKLTIRNDPKLKELPDGLKFIT.

This sequence belongs to the disease resistance NB-LRR family.

In terms of biological role, probable disease resistance protein. The sequence is that of Probable disease resistance protein At1g59620 from Arabidopsis thaliana (Mouse-ear cress).